A 310-amino-acid polypeptide reads, in one-letter code: Ribose-phosphate pyrophosphokinase (310 aa).

Residues 33–35 (DGE) and 92–93 (RQ) each bind ATP. Residues His-127 and Asp-166 each coordinate Mg(2+). Lys-189 is an active-site residue. D-ribose 5-phosphate is bound by residues Arg-191, Asp-215, and 219–223 (DTAGT).

This sequence belongs to the ribose-phosphate pyrophosphokinase family. Class I subfamily. In terms of assembly, homohexamer. Mg(2+) serves as cofactor.

It localises to the cytoplasm. It catalyses the reaction D-ribose 5-phosphate + ATP = 5-phospho-alpha-D-ribose 1-diphosphate + AMP + H(+). It functions in the pathway metabolic intermediate biosynthesis; 5-phospho-alpha-D-ribose 1-diphosphate biosynthesis; 5-phospho-alpha-D-ribose 1-diphosphate from D-ribose 5-phosphate (route I): step 1/1. Involved in the biosynthesis of the central metabolite phospho-alpha-D-ribosyl-1-pyrophosphate (PRPP) via the transfer of pyrophosphoryl group from ATP to 1-hydroxyl of ribose-5-phosphate (Rib-5-P). The sequence is that of Ribose-phosphate pyrophosphokinase from Bordetella pertussis (strain Tohama I / ATCC BAA-589 / NCTC 13251).